The following is a 591-amino-acid chain: Aspartate--tRNA ligase (591 aa).

Glutamate 175 lines the L-aspartate pocket. An aspartate region spans residues glutamine 199–lysine 202. Residue arginine 221 coordinates L-aspartate. Residues arginine 221 to glutamate 223 and glutamine 230 each bind ATP. Residue histidine 449 participates in L-aspartate binding. Glutamate 483 is an ATP binding site. Arginine 490 is an L-aspartate binding site. Residue glycine 535–arginine 538 coordinates ATP.

This sequence belongs to the class-II aminoacyl-tRNA synthetase family. Type 1 subfamily. In terms of assembly, homodimer.

It is found in the cytoplasm. It carries out the reaction tRNA(Asp) + L-aspartate + ATP = L-aspartyl-tRNA(Asp) + AMP + diphosphate. Functionally, catalyzes the attachment of L-aspartate to tRNA(Asp) in a two-step reaction: L-aspartate is first activated by ATP to form Asp-AMP and then transferred to the acceptor end of tRNA(Asp). This chain is Aspartate--tRNA ligase, found in Oceanobacillus iheyensis (strain DSM 14371 / CIP 107618 / JCM 11309 / KCTC 3954 / HTE831).